Here is a 251-residue protein sequence, read N- to C-terminus: Triosephosphate isomerase (251 aa).

9-11 (NWK) is a binding site for substrate. Residue His-94 is the Electrophile of the active site. Glu-167 functions as the Proton acceptor in the catalytic mechanism. Substrate is bound by residues Gly-173, Ser-213, and 234-235 (GG).

Belongs to the triosephosphate isomerase family. In terms of assembly, homodimer.

Its subcellular location is the cytoplasm. The catalysed reaction is D-glyceraldehyde 3-phosphate = dihydroxyacetone phosphate. The protein operates within carbohydrate biosynthesis; gluconeogenesis. Its pathway is carbohydrate degradation; glycolysis; D-glyceraldehyde 3-phosphate from glycerone phosphate: step 1/1. Its function is as follows. Involved in the gluconeogenesis. Catalyzes stereospecifically the conversion of dihydroxyacetone phosphate (DHAP) to D-glyceraldehyde-3-phosphate (G3P). The polypeptide is Triosephosphate isomerase (Finegoldia magna (strain ATCC 29328 / DSM 20472 / WAL 2508) (Peptostreptococcus magnus)).